The chain runs to 119 residues: Fluoride-specific ion channel FluC (119 aa).

The next 4 membrane-spanning stretches (helical) occupy residues 5–25, 30–50, 59–79, and 92–112; these read IIPL…LNLA, LSPA…IGIF, WKLL…GFSL, and SALA…WLGL. Na(+) is bound by residues Gly69 and Thr72.

The protein belongs to the fluoride channel Fluc/FEX (TC 1.A.43) family.

It is found in the cell inner membrane. The enzyme catalyses fluoride(in) = fluoride(out). Na(+) is not transported, but it plays an essential structural role and its presence is essential for fluoride channel function. Fluoride-specific ion channel. Important for reducing fluoride concentration in the cell, thus reducing its toxicity. This Neisseria meningitidis serogroup A / serotype 4A (strain DSM 15465 / Z2491) protein is Fluoride-specific ion channel FluC.